The following is a 319-amino-acid chain: Formimidoylglutamase (319 aa).

Residues histidine 131, aspartate 154, histidine 156, aspartate 158, cysteine 248, and aspartate 250 each coordinate Mn(2+).

It belongs to the arginase family. Requires Mn(2+) as cofactor.

The enzyme catalyses N-formimidoyl-L-glutamate + H2O = formamide + L-glutamate. Its pathway is amino-acid degradation; L-histidine degradation into L-glutamate; L-glutamate from N-formimidoyl-L-glutamate (hydrolase route): step 1/1. Functionally, catalyzes the conversion of N-formimidoyl-L-glutamate to L-glutamate and formamide. This chain is Formimidoylglutamase, found in Legionella pneumophila (strain Lens).